The sequence spans 167 residues: uncharacterized protein (167 aa).

The segment at 148–167 is disordered; it reads NKESRGENDGGEERESANIY.

This is an uncharacterized protein from Homo sapiens (Human).